Reading from the N-terminus, the 230-residue chain is MREERPIIALDFPSFDDVKDFLEHFPEDEKLYVKIGMEFFYAIGPEIVHYLKGLGHSIFLDLKLHDIPNTVRSAMSVLGTFGIDMVTVHAAGGVEMMSEAKKVLGDKAKLVAVTQLTSTSEEDMRDCQNIQTTVQESVVNYARKAKEAGLDGVVCSAQEVELIKAATADDFLCVTPGIRPAGSEIGDQKRVMTPQEAHQIGSDYIVVGRPIIQAENPWDAYHEIKKQWNS.

Substrate is bound by residues Asp-11, Lys-34, 61 to 70 (DLKLHDIPNT), Thr-117, Arg-179, Gln-188, Gly-208, and Arg-209. Lys-63 functions as the Proton donor in the catalytic mechanism.

This sequence belongs to the OMP decarboxylase family. Type 1 subfamily. Homodimer.

It catalyses the reaction orotidine 5'-phosphate + H(+) = UMP + CO2. It functions in the pathway pyrimidine metabolism; UMP biosynthesis via de novo pathway; UMP from orotate: step 2/2. In terms of biological role, catalyzes the decarboxylation of orotidine 5'-monophosphate (OMP) to uridine 5'-monophosphate (UMP). This chain is Orotidine 5'-phosphate decarboxylase, found in Streptococcus sanguinis (strain SK36).